The primary structure comprises 369 residues: Phosphoribosyl pyrophosphate synthase-associated protein 2 (369 aa).

The residue at position 1 (methionine 1) is an N-acetylmethionine. A Phosphothreonine modification is found at threonine 5. A phosphoserine mark is found at serine 219, serine 227, and serine 233.

Belongs to the ribose-phosphate pyrophosphokinase family. In terms of assembly, binds to PRPS1 and PRPS2.

Its function is as follows. Seems to play a negative regulatory role in 5-phosphoribose 1-diphosphate synthesis. The polypeptide is Phosphoribosyl pyrophosphate synthase-associated protein 2 (PRPSAP2) (Pongo abelii (Sumatran orangutan)).